A 139-amino-acid polypeptide reads, in one-letter code: Serpin-like protein HMSD (139 aa).

A signal peptide spans Met1–Ala20. Asn50 carries an N-linked (GlcNAc...) asparagine glycan.

This sequence belongs to the serpin family. In terms of tissue distribution, highly expressed in dendritic cells and primary leukemia cells, especially those of myeloid lineage.

Its subcellular location is the secreted. In terms of biological role, putative serine protease inhibitor. The sequence is that of Serpin-like protein HMSD (HMSD) from Homo sapiens (Human).